A 282-amino-acid chain; its full sequence is Undecaprenyl-diphosphatase (282 aa).

8 helical membrane-spanning segments follow: residues 1–21, 40–60, 89–109, 112–132, 153–173, 196–216, 228–248, and 258–278; these read MNLF…FLPI, GAAF…IYFA, WMIA…KHEI, VLRS…VLVV, LSWT…IPGS, FSFL…LYQT, LNLA…IAFL, and GIFI…IGTG.

It belongs to the UppP family.

Its subcellular location is the cell inner membrane. The enzyme catalyses di-trans,octa-cis-undecaprenyl diphosphate + H2O = di-trans,octa-cis-undecaprenyl phosphate + phosphate + H(+). Catalyzes the dephosphorylation of undecaprenyl diphosphate (UPP). Confers resistance to bacitracin. The sequence is that of Undecaprenyl-diphosphatase from Chlorobaculum tepidum (strain ATCC 49652 / DSM 12025 / NBRC 103806 / TLS) (Chlorobium tepidum).